The following is a 383-amino-acid chain: S-adenosylmethionine synthase (383 aa).

Position 15 (histidine 15) interacts with ATP. Aspartate 17 is a Mg(2+) binding site. Glutamate 43 serves as a coordination point for K(+). L-methionine contacts are provided by glutamate 56 and glutamine 99. The tract at residues 99 to 109 is flexible loop; sequence QSPDINQGVDR. ATP contacts are provided by residues 164-166, 230-231, aspartate 239, 245-246, alanine 262, and lysine 266; these read DAK, RF, and RK. An L-methionine-binding site is contributed by aspartate 239. Residue lysine 270 coordinates L-methionine.

The protein belongs to the AdoMet synthase family. As to quaternary structure, homotetramer; dimer of dimers. The cofactor is Mg(2+). It depends on K(+) as a cofactor.

It localises to the cytoplasm. It carries out the reaction L-methionine + ATP + H2O = S-adenosyl-L-methionine + phosphate + diphosphate. It functions in the pathway amino-acid biosynthesis; S-adenosyl-L-methionine biosynthesis; S-adenosyl-L-methionine from L-methionine: step 1/1. Functionally, catalyzes the formation of S-adenosylmethionine (AdoMet) from methionine and ATP. The overall synthetic reaction is composed of two sequential steps, AdoMet formation and the subsequent tripolyphosphate hydrolysis which occurs prior to release of AdoMet from the enzyme. In Shewanella sp. (strain ANA-3), this protein is S-adenosylmethionine synthase.